We begin with the raw amino-acid sequence, 185 residues long: ATP-dependent protease subunit HslV (185 aa).

T12 is an active-site residue. Positions 168, 171, and 174 each coordinate Na(+).

It belongs to the peptidase T1B family. HslV subfamily. A double ring-shaped homohexamer of HslV is capped on each side by a ring-shaped HslU homohexamer. The assembly of the HslU/HslV complex is dependent on binding of ATP.

It localises to the cytoplasm. The catalysed reaction is ATP-dependent cleavage of peptide bonds with broad specificity.. With respect to regulation, allosterically activated by HslU binding. In terms of biological role, protease subunit of a proteasome-like degradation complex believed to be a general protein degrading machinery. This Cereibacter sphaeroides (strain KD131 / KCTC 12085) (Rhodobacter sphaeroides) protein is ATP-dependent protease subunit HslV.